Consider the following 211-residue polypeptide: NADH-quinone oxidoreductase subunit I (211 aa).

The segment at 21-41 (PTTEQYPEQKKETAPRFHGRH) is disordered. 2 4Fe-4S ferredoxin-type domains span residues 43 to 73 (LNRH…VEGA) and 89 to 118 (RVYQ…MSND). Residues cysteine 53, cysteine 56, cysteine 59, cysteine 63, cysteine 98, cysteine 101, cysteine 104, and cysteine 108 each coordinate [4Fe-4S] cluster. A disordered region spans residues 141–211 (RAGMESPPHP…AHGAGSERPR (71 aa)). The segment covering 152-166 (RLGESETDYYTRDPD) has biased composition (basic and acidic residues). The span at 179–191 (DEADEAGEAGEAG) shows a compositional bias: acidic residues. The span at 192 to 211 (EAERAADKVPAHGAGSERPR) shows a compositional bias: basic and acidic residues.

It belongs to the complex I 23 kDa subunit family. In terms of assembly, NDH-1 is composed of 14 different subunits. Subunits NuoA, H, J, K, L, M, N constitute the membrane sector of the complex. It depends on [4Fe-4S] cluster as a cofactor.

It is found in the cell membrane. It catalyses the reaction a quinone + NADH + 5 H(+)(in) = a quinol + NAD(+) + 4 H(+)(out). NDH-1 shuttles electrons from NADH, via FMN and iron-sulfur (Fe-S) centers, to quinones in the respiratory chain. The immediate electron acceptor for the enzyme in this species is believed to be ubiquinone. Couples the redox reaction to proton translocation (for every two electrons transferred, four hydrogen ions are translocated across the cytoplasmic membrane), and thus conserves the redox energy in a proton gradient. The protein is NADH-quinone oxidoreductase subunit I of Parafrankia sp. (strain EAN1pec).